Reading from the N-terminus, the 297-residue chain is Bifunctional protein FolD (297 aa).

NADP(+) is bound by residues 166 to 168 (GRS), serine 191, and isoleucine 232.

It belongs to the tetrahydrofolate dehydrogenase/cyclohydrolase family. In terms of assembly, homodimer.

It catalyses the reaction (6R)-5,10-methylene-5,6,7,8-tetrahydrofolate + NADP(+) = (6R)-5,10-methenyltetrahydrofolate + NADPH. The enzyme catalyses (6R)-5,10-methenyltetrahydrofolate + H2O = (6R)-10-formyltetrahydrofolate + H(+). Its pathway is one-carbon metabolism; tetrahydrofolate interconversion. Its function is as follows. Catalyzes the oxidation of 5,10-methylenetetrahydrofolate to 5,10-methenyltetrahydrofolate and then the hydrolysis of 5,10-methenyltetrahydrofolate to 10-formyltetrahydrofolate. The polypeptide is Bifunctional protein FolD (Phenylobacterium zucineum (strain HLK1)).